The chain runs to 391 residues: UPF0229 protein BCA_0588 (391 aa).

Polar residues predominate over residues 1-16 (MGEENQPNYTISQENW). Disordered regions lie at residues 1 to 31 (MGEENQPNYTISQENWSLHRKGYDDQQRHQE) and 80 to 117 (HVGQGNGDSKVGDVVARDGSGGQKQKGPGKGQGAGDAA). The segment covering 21-31 (KGYDDQQRHQE) has biased composition (basic and acidic residues). Positions 98–115 (GSGGQKQKGPGKGQGAGD) are enriched in gly residues.

Belongs to the UPF0229 family.

The sequence is that of UPF0229 protein BCA_0588 from Bacillus cereus (strain 03BB102).